The chain runs to 223 residues: Deoxyribose-phosphate aldolase (223 aa).

Residue Asp-91 is the Proton donor/acceptor of the active site. The Schiff-base intermediate with acetaldehyde role is filled by Lys-153. Catalysis depends on Lys-182, which acts as the Proton donor/acceptor.

This sequence belongs to the DeoC/FbaB aldolase family. DeoC type 1 subfamily.

Its subcellular location is the cytoplasm. The enzyme catalyses 2-deoxy-D-ribose 5-phosphate = D-glyceraldehyde 3-phosphate + acetaldehyde. It participates in carbohydrate degradation; 2-deoxy-D-ribose 1-phosphate degradation; D-glyceraldehyde 3-phosphate and acetaldehyde from 2-deoxy-alpha-D-ribose 1-phosphate: step 2/2. In terms of biological role, catalyzes a reversible aldol reaction between acetaldehyde and D-glyceraldehyde 3-phosphate to generate 2-deoxy-D-ribose 5-phosphate. In Streptococcus pyogenes serotype M3 (strain ATCC BAA-595 / MGAS315), this protein is Deoxyribose-phosphate aldolase.